A 112-amino-acid polypeptide reads, in one-letter code: Peptidyl-tRNA hydrolase (112 aa).

Belongs to the PTH2 family.

The protein localises to the cytoplasm. The catalysed reaction is an N-acyl-L-alpha-aminoacyl-tRNA + H2O = an N-acyl-L-amino acid + a tRNA + H(+). The natural substrate for this enzyme may be peptidyl-tRNAs which drop off the ribosome during protein synthesis. This Methanothermobacter thermautotrophicus (strain ATCC 29096 / DSM 1053 / JCM 10044 / NBRC 100330 / Delta H) (Methanobacterium thermoautotrophicum) protein is Peptidyl-tRNA hydrolase.